Reading from the N-terminus, the 465-residue chain is Iron-sulfur cluster assembly SufBD family protein SERP0500 (465 aa).

Belongs to the iron-sulfur cluster assembly SufBD family.

This is Iron-sulfur cluster assembly SufBD family protein SERP0500 from Staphylococcus epidermidis (strain ATCC 35984 / DSM 28319 / BCRC 17069 / CCUG 31568 / BM 3577 / RP62A).